The following is a 517-amino-acid chain: Putative thymidine phosphorylase (517 aa).

The protein belongs to the thymidine/pyrimidine-nucleoside phosphorylase family. Type 2 subfamily.

It catalyses the reaction thymidine + phosphate = 2-deoxy-alpha-D-ribose 1-phosphate + thymine. The protein is Putative thymidine phosphorylase of Legionella pneumophila (strain Corby).